Reading from the N-terminus, the 123-residue chain is Small ribosomal subunit protein uS12 (123 aa).

Position 89 is a 3-methylthioaspartic acid (aspartate 89).

This sequence belongs to the universal ribosomal protein uS12 family. In terms of assembly, part of the 30S ribosomal subunit. Contacts proteins S8 and S17. May interact with IF1 in the 30S initiation complex.

Functionally, with S4 and S5 plays an important role in translational accuracy. Interacts with and stabilizes bases of the 16S rRNA that are involved in tRNA selection in the A site and with the mRNA backbone. Located at the interface of the 30S and 50S subunits, it traverses the body of the 30S subunit contacting proteins on the other side and probably holding the rRNA structure together. The combined cluster of proteins S8, S12 and S17 appears to hold together the shoulder and platform of the 30S subunit. This chain is Small ribosomal subunit protein uS12, found in Gluconobacter oxydans (strain 621H) (Gluconobacter suboxydans).